Consider the following 1059-residue polypeptide: Potassium transporter TRK1 (1059 aa).

The Cytoplasmic portion of the chain corresponds to 1–46; it reads MLYRVSGFYKRHTRNFTNIDYGYYIRNFIHHIASKIYPYAKVVLPN. A helical membrane pass occupies residues 47-67; that stretch reads FRAAHYFYILTLVILGSILVY. Residues 68–73 are Extracellular-facing; that stretch reads PVKTCA. An intramembrane segment occupies 74 to 90; it reads YIDVLFFTAGASTQAGL. Topologically, residues 91–99 are extracellular; the sequence is NTVNVNDLS. A helical membrane pass occupies residues 100–122; the sequence is LYQQIVLYLLATLATPIFIHGSL. At 123-625 the chain is on the cytoplasmic side; sequence LFVRLYYFER…LGGIEYRAVK (503 aa). Disordered regions lie at residues 180–276, 304–350, and 404–574; these read REAE…IDPE, IGSP…EDED, and PWTS…SIEN. Over residues 186-203 the composition is skewed to low complexity; it reads SSSSPQSSSSQTSQPVST. A compositionally biased stretch (basic and acidic residues) spans 236-245; that stretch reads EKIHFEEPQR. The segment covering 335 to 344 has biased composition (polar residues); it reads PATNSVGTGN. A compositionally biased stretch (low complexity) spans 412–423; it reads TLSNSSKKGSLS. 2 stretches are compositionally biased toward acidic residues: residues 428-449 and 469-490; these read DTED…SDIS and YEED…DDGE. Residues 524 to 536 show a composition bias toward polar residues; the sequence is RSNTLDTPQQNTS. Residues 540-552 show a composition bias toward basic residues; the sequence is KIRKKAPKRKTPR. Over residues 556-566 the composition is skewed to polar residues; sequence NASFNQHSNVS. The chain crosses the membrane as a helical span at residues 626–649; sequence LLIKIIVVYYVGFNIIPGVMLSIW. Residues 650 to 668 lie on the Extracellular side of the membrane; sequence IYCMPHYKNLMISSSISPA. An intramembrane segment occupies 669 to 685; sequence WWAFFTSQSSFNDLGLT. At 686 to 696 the chain is on the extracellular side; that stretch reads LTSNSMMSFNQ. Residues 697–713 form a helical membrane-spanning segment; that stretch reads NAFVQILCSFLIVIGNT. Over 714 to 757 the chain is Cytoplasmic; that stretch reads GFPILLRFIIWVMFKTARPLSLYKESLGFLLDHPRRCFTLLFPS. A helical membrane pass occupies residues 758–781; it reads VPTWWLFFILVVLNGFDLVIFCIL. Residues 782-796 are Extracellular-facing; sequence DLHDDTFKGVDMGYR. The stretch at 797-813 is an intramembrane region; that stretch reads VLNGLFQAFCTRTVGFS. Residues 814 to 820 lie on the Extracellular side of the membrane; sequence VMDLSQL. Residues 821–844 traverse the membrane as a helical segment; it reads HAATQVSYLIMMYISVLPIAISVR. Over 845-877 the chain is Cytoplasmic; that stretch reads RTNVYEEQSLGVYAKENAEGVDESAPSNYVGSH. A helical transmembrane segment spans residues 878–899; sequence LRNQLSYDLWYICLGLFIICIA. At 900–912 the chain is on the extracellular side; it reads EGKRLKEQDLRFS. The stretch at 913–931 is an intramembrane region; that stretch reads IFAVLFEIVSAYGTVGMSM. Residues 932 to 945 lie on the Extracellular side of the membrane; sequence GYPGVDCSLSGEFN. The helical transmembrane segment at 946 to 968 threads the bilayer; it reads VISKLVIIAMMIRGRHRGLPYTI. The Cytoplasmic portion of the chain corresponds to 969-1059; sequence DRAIMLPNAA…RYVVRTVSEV (91 aa).

Belongs to the TrkH potassium transport family.

The protein localises to the cell membrane. It carries out the reaction K(+)(in) = K(+)(out). It catalyses the reaction chloride(in) = chloride(out). TRK1-mediated chloride conductance is blocked by 4,4'-diisothiocyanatostilbene-2,2'-disulfonic acid. Functionally, potassium transporter that mediates K(+) influx, as well as Cl(-) efflux as a secondary function. TRK1 is the major K(+) uptake transporter that regulates membrane potential and intracellular pH. The TRK1-mediated Cl(-) efflux should serve as a Cl(-) detoxification route and may play a role in sustaining C.albicans on mammalian epithelial surfaces, or in physiological saline solutions such as saliva. Its function is as follows. Mediates candidacidal activities of cysteine-free peptides, but not of defensins. The hallmark of salivary gland-secreted histatin-5 (Hst 5) killing of C.albicans is the rapid efflux of cellular ATP and other small nucleotides and ions from the cell as well as concurrent intracellular uptake of propidium iodide (PI). TRK1 is the channel for Hst 5-induced killing and histatin-5 may directly or indirectly alter TRK1 function, allowing the efflux of larger anions, including ATP, and the influx of small cationic dyes, such as PI. The polypeptide is Potassium transporter TRK1 (Candida albicans (Yeast)).